The chain runs to 546 residues: Phosphomethylpyrimidine synthase (546 aa).

Substrate is bound by residues Asn145, Met174, Tyr203, His239, 259–261 (SRG), 300–303 (DGLR), and Glu339. His343 lines the Zn(2+) pocket. Position 366 (Tyr366) interacts with substrate. His407 contacts Zn(2+). Cys487, Cys490, and Cys495 together coordinate [4Fe-4S] cluster.

The protein belongs to the ThiC family. It depends on [4Fe-4S] cluster as a cofactor.

The enzyme catalyses 5-amino-1-(5-phospho-beta-D-ribosyl)imidazole + S-adenosyl-L-methionine = 4-amino-2-methyl-5-(phosphooxymethyl)pyrimidine + CO + 5'-deoxyadenosine + formate + L-methionine + 3 H(+). Its pathway is cofactor biosynthesis; thiamine diphosphate biosynthesis. Catalyzes the synthesis of the hydroxymethylpyrimidine phosphate (HMP-P) moiety of thiamine from aminoimidazole ribotide (AIR) in a radical S-adenosyl-L-methionine (SAM)-dependent reaction. This Mycobacterium ulcerans (strain Agy99) protein is Phosphomethylpyrimidine synthase.